Here is a 111-residue protein sequence, read N- to C-terminus: UPF0060 membrane protein Aave_2845 (111 aa).

The next 4 helical transmembrane spans lie at 7–27 (FLLYAVTALAEIAGCYLPWLW), 33–53 (SAWLLVPGAACLALFAWLLTL), 63–83 (AAYGGVYVAVALGWLWAVDGI), and 90–110 (LAGAAVTLAGMAIIAFAPRGA).

This sequence belongs to the UPF0060 family.

The protein localises to the cell inner membrane. The protein is UPF0060 membrane protein Aave_2845 of Paracidovorax citrulli (strain AAC00-1) (Acidovorax citrulli).